The chain runs to 507 residues: Histidine ammonia-lyase (507 aa).

The segment at residues 140-142 (ASG) is a cross-link (5-imidazolinone (Ala-Gly)). A 2,3-didehydroalanine (Ser) modification is found at Ser141.

The protein belongs to the PAL/histidase family. In terms of processing, contains an active site 4-methylidene-imidazol-5-one (MIO), which is formed autocatalytically by cyclization and dehydration of residues Ala-Ser-Gly.

It localises to the cytoplasm. The catalysed reaction is L-histidine = trans-urocanate + NH4(+). The protein operates within amino-acid degradation; L-histidine degradation into L-glutamate; N-formimidoyl-L-glutamate from L-histidine: step 1/3. The chain is Histidine ammonia-lyase from Yersinia enterocolitica serotype O:8 / biotype 1B (strain NCTC 13174 / 8081).